We begin with the raw amino-acid sequence, 477 residues long: Cysteine--tRNA ligase (477 aa).

Cysteine 29 contacts Zn(2+). Residues proline 31–histidine 41 carry the 'HIGH' region motif. Residues cysteine 209, histidine 234, and glutamate 238 each coordinate Zn(2+). Residues lysine 266–serine 270 carry the 'KMSKS' region motif. Lysine 269 contributes to the ATP binding site.

The protein belongs to the class-I aminoacyl-tRNA synthetase family. Zn(2+) is required as a cofactor.

It localises to the cytoplasm. The catalysed reaction is tRNA(Cys) + L-cysteine + ATP = L-cysteinyl-tRNA(Cys) + AMP + diphosphate. This chain is Cysteine--tRNA ligase (cysS), found in Pyrococcus abyssi (strain GE5 / Orsay).